Consider the following 1274-residue polypeptide: Clustered mitochondria protein homolog (1274 aa).

Residues 1–53 (MAQTNGELEHSKGMSSPAVRISQAQKSTKLTVDPESPEQVANGTHAEGEQPEE) are disordered. TPR repeat units lie at residues 293-326 (SPSF…PNNP), 510-543 (DYGG…KKHP), and 628-661 (AKEA…ERVD). The Clu domain maps to 342 to 586 (DITRSQENYL…RVTPLDVMWQ (245 aa)). Disordered regions lie at residues 631–655 (AAKK…EEAL) and 893–925 (VSNG…ARAA). TPR repeat units lie at residues 998 to 1031 (AKLY…TERT), 1040 to 1073 (ILSY…WKII), 1082 to 1115 (ITTM…CESL), and 1124 to 1157 (ATIL…FLQQ). Residues 1197–1274 (INMTPRTLGT…KLRGSKKSSA (78 aa)) are disordered. A compositionally biased stretch (polar residues) spans 1200 to 1217 (TPRTLGTRVQPQVGQTAP).

Belongs to the CLU family. In terms of assembly, may associate with the eukaryotic translation initiation factor 3 (eIF-3) complex.

Its subcellular location is the cytoplasm. Its function is as follows. mRNA-binding protein involved in proper cytoplasmic distribution of mitochondria. This is Clustered mitochondria protein homolog from Aspergillus terreus (strain NIH 2624 / FGSC A1156).